A 442-amino-acid chain; its full sequence is Endothelin receptor type B (442 aa).

Residues 1–26 form the signal peptide; the sequence is MQSSASRCGRALVALLLACGLLGVWG. Residues 27–101 lie on the Extracellular side of the membrane; the sequence is EKRGFPPAQA…RKIEINKTFK (75 aa). Residues N60 and N97 are each glycosylated (N-linked (GlcNAc...) asparagine). The helical transmembrane segment at 102–126 threads the bilayer; the sequence is YINTIVSCLVFVLGIIGNSTLLRII. The Cytoplasmic portion of the chain corresponds to 127–137; that stretch reads YKNKCMRNGPN. Residues 138 to 163 form a helical membrane-spanning segment; sequence ILIASLALGDLLHIIIDIPINAYKLL. Residues 164–175 are Extracellular-facing; it reads AGDWPFGAEMCK. C174 and C255 are disulfide-bonded. The chain crosses the membrane as a helical span at residues 176–197; it reads LVPFIQKASVGITVLSLCALSI. The Cytoplasmic portion of the chain corresponds to 198 to 218; sequence DRYRAVASWSRIKGIGVPKWT. Residues 219 to 243 traverse the membrane as a helical segment; that stretch reads AVEIVLIWVVSVVLAVPEAIGFDVI. At 244 to 271 the chain is on the extracellular side; it reads TSDYKGKPLRVCMLNPFQKTAFMQFYKT. Residues 272-296 form a helical membrane-spanning segment; it reads AKDWWLFSFYFCLPLAITAIFYTLM. Over 297–324 the chain is Cytoplasmic; it reads TCEMLRKKSGMQIALNDHLKQRREVAKT. The residue at position 305 (S305) is a Phosphoserine. A helical membrane pass occupies residues 325–350; sequence VFCLVLVFALCWLPLHLSRILKLTLY. Topologically, residues 351 to 362 are extracellular; that stretch reads DQSNPQRCELLS. A helical transmembrane segment spans residues 363 to 389; that stretch reads FLLVLDYIGINMASLNSCINPIALYLV. Over 390–442 the chain is Cytoplasmic; the sequence is SKRFKNCFKSCLCCWCQTFEEKQSLEEKQSCLKFKANDHGYDNFRSSNKYSSS. 3 S-palmitoyl cysteine lipidation sites follow: C402, C403, and C405. Phosphoserine is present on S419. Y439 is subject to Phosphotyrosine. S440, S441, and S442 each carry phosphoserine.

It belongs to the G-protein coupled receptor 1 family. Endothelin receptor subfamily. EDNRB sub-subfamily. As to expression, widely distributed in cell types of a variety of tissues.

It is found in the cell membrane. Functionally, non-specific receptor for endothelin 1, 2, and 3. Mediates its action by association with G proteins that activate a phosphatidylinositol-calcium second messenger system. The chain is Endothelin receptor type B from Rattus norvegicus (Rat).